A 96-amino-acid chain; its full sequence is Putative defensin-like protein 263 (96 aa).

The signal sequence occupies residues 1–26; it reads MEKTSLKLVFLFSLTVIALCLSLSAA. Disulfide bonds link cysteine 48/cysteine 96, cysteine 67/cysteine 86, cysteine 73/cysteine 91, and cysteine 77/cysteine 93.

It belongs to the DEFL family.

The protein localises to the secreted. In Arabidopsis thaliana (Mouse-ear cress), this protein is Putative defensin-like protein 263.